We begin with the raw amino-acid sequence, 425 residues long: Serine--tRNA ligase (425 aa).

233–235 provides a ligand contact to L-serine; it reads TAE. 264–266 is an ATP binding site; it reads RRE. Residue E287 coordinates L-serine. Residue 351–354 coordinates ATP; the sequence is EISS. S385 lines the L-serine pocket.

Belongs to the class-II aminoacyl-tRNA synthetase family. Type-1 seryl-tRNA synthetase subfamily. Homodimer. The tRNA molecule binds across the dimer.

The protein localises to the cytoplasm. The enzyme catalyses tRNA(Ser) + L-serine + ATP = L-seryl-tRNA(Ser) + AMP + diphosphate + H(+). It catalyses the reaction tRNA(Sec) + L-serine + ATP = L-seryl-tRNA(Sec) + AMP + diphosphate + H(+). Its pathway is aminoacyl-tRNA biosynthesis; selenocysteinyl-tRNA(Sec) biosynthesis; L-seryl-tRNA(Sec) from L-serine and tRNA(Sec): step 1/1. Catalyzes the attachment of serine to tRNA(Ser). Is also able to aminoacylate tRNA(Sec) with serine, to form the misacylated tRNA L-seryl-tRNA(Sec), which will be further converted into selenocysteinyl-tRNA(Sec). This is Serine--tRNA ligase from Prochlorococcus marinus (strain MIT 9515).